The primary structure comprises 2179 residues: Voltage-dependent L-type calcium channel subunit alpha-1D (2179 aa).

Disordered regions lie at residues methionine 1–alanine 21, threonine 30–threonine 49, and lysine 64–serine 100. Residues methionine 1 to lysine 126 lie on the Cytoplasmic side of the membrane. Residues glycine 38–threonine 49 are compositionally biased toward polar residues. Residues glutamine 82 to lysine 93 are compositionally biased toward basic residues. An I repeat occupies asparagine 113–phenylalanine 409. A helical transmembrane segment spans residues proline 127–isoleucine 145. The Extracellular portion of the chain corresponds to tyrosine 146–lysine 163. The chain crosses the membrane as a helical span at residues valine 164 to tyrosine 183. Residues glycine 184–asparagine 195 lie on the Cytoplasmic side of the membrane. A helical transmembrane segment spans residues glycine 196 to leucine 214. Residues glutamate 215–aspartate 235 are Extracellular-facing. A helical transmembrane segment spans residues valine 236–valine 254. At proline 255 to histidine 273 the chain is on the cytoplasmic side. The helical transmembrane segment at isoleucine 274–phenylalanine 293 threads the bilayer. At isoleucine 294 to tryptophan 381 the chain is on the extracellular side. Glutamate 364 is a Ca(2+) binding site. The chain crosses the membrane as a helical span at residues proline 382–serine 406. At glycine 407–valine 543 the chain is on the cytoplasmic side. The segment at glutamine 429–glutamate 446 is binding to the beta subunit. Residues aspartate 449 to serine 480 are disordered. Over residues asparagine 463–valine 479 the composition is skewed to polar residues. The stretch at asparagine 529–leucine 775 is one II repeat. Residues threonine 544 to glutamate 563 form a helical membrane-spanning segment. The Extracellular portion of the chain corresponds to histidine 564–alanine 578. A helical membrane pass occupies residues asparagine 579–leucine 597. Residues glycine 598–serine 605 lie on the Cytoplasmic side of the membrane. Residues leucine 606 to leucine 624 traverse the membrane as a helical segment. Residues valine 625 to glycine 634 are Extracellular-facing. A helical transmembrane segment spans residues valine 635–tryptophan 653. Over threonine 654–serine 672 the chain is Cytoplasmic. Residues leucine 673 to glycine 693 traverse the membrane as a helical segment. The Extracellular portion of the chain corresponds to glycine 694–isoleucine 747. A Ca(2+)-binding site is contributed by glutamate 725. The chain crosses the membrane as a helical span at residues valine 748–valine 772. Residues alanine 771–lysine 810 adopt a coiled-coil conformation. The Cytoplasmic portion of the chain corresponds to aspartate 773–histidine 906. Over residues lysine 786 to lysine 810 the composition is skewed to basic and acidic residues. Residues lysine 786–glutamate 870 are disordered. A compositionally biased stretch (polar residues) spans proline 811–lysine 822. Acidic residues predominate over residues valine 845–glutamate 858. An III repeat occupies asparagine 893–phenylalanine 1175. The chain crosses the membrane as a helical span at residues isoleucine 907–alanine 925. Residues glutamate 926–tyrosine 941 lie on the Extracellular side of the membrane. Residues phenylalanine 942–phenylalanine 961 traverse the membrane as a helical segment. Residues glycine 962–asparagine 973 lie on the Cytoplasmic side of the membrane. The chain crosses the membrane as a helical span at residues tyrosine 974 to isoleucine 992. The Extracellular segment spans residues glutamine 993 to serine 998. A helical membrane pass occupies residues valine 999–alanine 1018. The Cytoplasmic portion of the chain corresponds to lysine 1019–asparagine 1037. A helical membrane pass occupies residues isoleucine 1038–phenylalanine 1057. At lysine 1058–glutamate 1147 the chain is on the extracellular side. The tract at residues arginine 1095 to asparagine 1185 is dihydropyridine binding. Glutamate 1121 contacts Ca(2+). Residues isoleucine 1148–valine 1168 form a helical membrane-spanning segment. Over glycine 1169–serine 1225 the chain is Cytoplasmic. The stretch at asparagine 1212–phenylalanine 1487 is one IV repeat. Residues proline 1226–methionine 1244 traverse the membrane as a helical segment. The Extracellular segment spans residues glutamine 1245–isoleucine 1259. A helical transmembrane segment spans residues leucine 1260–phenylalanine 1279. Over lysine 1280–serine 1286 the chain is Cytoplasmic. Residues aspartate 1287–glutamate 1308 form a helical membrane-spanning segment. At alanine 1309–isoleucine 1333 the chain is on the extracellular side. The chain crosses the membrane as a helical span at residues serine 1334–glycine 1353. The Cytoplasmic portion of the chain corresponds to glutamate 1354–tyrosine 1372. The helical transmembrane segment at valine 1373–phenylalanine 1392 threads the bilayer. The Extracellular portion of the chain corresponds to glycine 1393 to phenylalanine 1459. A dihydropyridine binding region spans residues leucine 1440–lysine 1506. The phenylalkylamine binding stretch occupies residues glutamate 1452–serine 1495. The chain crosses the membrane as a helical span at residues alanine 1460–methionine 1484. Residues aspartate 1485–leucine 2179 lie on the Cytoplasmic side of the membrane. 3 disordered regions span residues leucine 1704–lysine 1789, phenylalanine 1896–phenylalanine 1941, and glycine 2135–aspartate 2171. Residues serine 1764–methionine 1782 show a composition bias toward polar residues. Acidic residues predominate over residues serine 2156–aspartate 2171.

This sequence belongs to the calcium channel alpha-1 subunit (TC 1.A.1.11) family. CACNA1D subfamily. In terms of assembly, voltage-dependent calcium channels are multisubunit complexes, consisting of alpha-1, alpha-2, beta and delta subunits in a 1:1:1:1 ratio. The channel activity is directed by the pore-forming and voltage-sensitive alpha-1 subunit. In many cases, this subunit is sufficient to generate voltage-sensitive calcium channel activity. The auxiliary subunits beta and alpha-2/delta linked by a disulfide bridge regulate the channel activity. Interacts (via IQ domain) with CABP1 and CABP4 in a calcium independent manner. Interacts with RIMBP2. As to expression, expressed in the inner hair cells (IHC) of the cochlea.

It localises to the membrane. The enzyme catalyses Ca(2+)(in) = Ca(2+)(out). Its function is as follows. Voltage-sensitive calcium channels (VSCC) mediate the entry of calcium ions into excitable cells and are also involved in a variety of calcium-dependent processes, including muscle contraction, hormone or neurotransmitter release, gene expression, cell motility, cell division and cell death. The isoform alpha-1D gives rise to L-type calcium currents. Long-lasting (L-type) calcium channels belong to the 'high-voltage activated' (HVA) group. They are blocked by dihydropyridines (DHP), phenylalkylamines, and by benzothiazepines. This is Voltage-dependent L-type calcium channel subunit alpha-1D (Cacna1d) from Mus musculus (Mouse).